The primary structure comprises 86 residues: MeuNaTxbeta-1 (86 aa).

An N-terminal signal peptide occupies residues 1–20 (MMKIIIFLIVSSLVLIGVKT). The 63-residue stretch at 21–83 (DNGYLLDKYT…LWHYETNKCN (63 aa)) folds into the LCN-type CS-alpha/beta domain. Cystine bridges form between Cys-32/Cys-82, Cys-36/Cys-57, Cys-43/Cys-64, and Cys-47/Cys-66.

In terms of tissue distribution, expressed by the venom gland.

It localises to the secreted. In terms of biological role, inhibits sodium channels (Nav). Also moderately inhibits human calcium-activated potassium channel KCa1.1/KCNMA1/BK (41.9% decrease at 2 uM toxin concentration). Shows moderate antimicrobial activity against both Gram-positive and -negative bacteria. The chain is MeuNaTxbeta-1 from Mesobuthus eupeus (Lesser Asian scorpion).